The primary structure comprises 352 residues: Protein pelota homolog (352 aa).

The protein belongs to the eukaryotic release factor 1 family. Pelota subfamily. Monomer. Requires a divalent metal cation as cofactor.

The protein localises to the cytoplasm. In terms of biological role, may function in recognizing stalled ribosomes, interact with stem-loop structures in stalled mRNA molecules, and effect endonucleolytic cleavage of the mRNA. May play a role in the release non-functional ribosomes and degradation of damaged mRNAs. Has endoribonuclease activity. This Thermofilum pendens (strain DSM 2475 / Hrk 5) protein is Protein pelota homolog.